A 235-amino-acid chain; its full sequence is Large ribosomal subunit protein uL1 (235 aa).

Belongs to the universal ribosomal protein uL1 family. In terms of assembly, part of the 50S ribosomal subunit.

Functionally, binds directly to 23S rRNA. The L1 stalk is quite mobile in the ribosome, and is involved in E site tRNA release. Its function is as follows. Protein L1 is also a translational repressor protein, it controls the translation of the L11 operon by binding to its mRNA. This is Large ribosomal subunit protein uL1 from Fusobacterium nucleatum subsp. nucleatum (strain ATCC 25586 / DSM 15643 / BCRC 10681 / CIP 101130 / JCM 8532 / KCTC 2640 / LMG 13131 / VPI 4355).